The chain runs to 72 residues: Translation initiation factor IF-1 (72 aa).

The S1-like domain maps to M1–R72.

The protein belongs to the IF-1 family. In terms of assembly, component of the 30S ribosomal translation pre-initiation complex which assembles on the 30S ribosome in the order IF-2 and IF-3, IF-1 and N-formylmethionyl-tRNA(fMet); mRNA recruitment can occur at any time during PIC assembly.

The protein localises to the cytoplasm. Its function is as follows. One of the essential components for the initiation of protein synthesis. Stabilizes the binding of IF-2 and IF-3 on the 30S subunit to which N-formylmethionyl-tRNA(fMet) subsequently binds. Helps modulate mRNA selection, yielding the 30S pre-initiation complex (PIC). Upon addition of the 50S ribosomal subunit IF-1, IF-2 and IF-3 are released leaving the mature 70S translation initiation complex. The sequence is that of Translation initiation factor IF-1 from Buchnera aphidicola subsp. Baizongia pistaciae (strain Bp).